The sequence spans 397 residues: Diphosphomevalonate decarboxylase (397 aa).

Residues 19–22, R74, 153–158, and T209 contribute to the (R)-5-diphosphomevalonate site; these read YWGK and SGSACR. The tract at residues 378 to 397 is disordered; it reads GPGPQDTKSSLIDPETGLPR.

The protein belongs to the diphosphomevalonate decarboxylase family. Homodimer.

The catalysed reaction is (R)-5-diphosphomevalonate + ATP = isopentenyl diphosphate + ADP + phosphate + CO2. It participates in isoprenoid biosynthesis; isopentenyl diphosphate biosynthesis via mevalonate pathway; isopentenyl diphosphate from (R)-mevalonate: step 3/3. Functionally, diphosphomevalonate decarboxylase; part of the second module of ergosterol biosynthesis pathway that includes the middle steps of the pathway. The second module is carried out in the vacuole and involves the formation of farnesyl diphosphate, which is also an important intermediate in the biosynthesis of ubiquinone, dolichol, heme and prenylated proteins. Activity by the mevalonate kinase ERG12 first converts mevalonate into 5-phosphomevalonate. 5-phosphomevalonate is then further converted to 5-diphosphomevalonate by the phosphomevalonate kinase ERG8. The diphosphomevalonate decarboxylase MVD1/ERG19 then produces isopentenyl diphosphate. The isopentenyl-diphosphate delta-isomerase IDI1 then catalyzes the 1,3-allylic rearrangement of the homoallylic substrate isopentenyl (IPP) to its highly electrophilic allylic isomer, dimethylallyl diphosphate (DMAPP). Finally the farnesyl diphosphate synthase ERG20 catalyzes the sequential condensation of isopentenyl pyrophosphate with dimethylallyl pyrophosphate, and then with the resultant geranylpyrophosphate to the ultimate product farnesyl pyrophosphate. The polypeptide is Diphosphomevalonate decarboxylase (Eremothecium gossypii (strain ATCC 10895 / CBS 109.51 / FGSC 9923 / NRRL Y-1056) (Yeast)).